Here is a 276-residue protein sequence, read N- to C-terminus: Sec-independent protein translocase protein TatC (276 aa).

Residues M1 to K29 form a disordered region. A run of 6 helical transmembrane segments spans residues G49–L69, L103–T123, G136–L156, L187–A207, W221–T241, and M242–W262.

It belongs to the TatC family. As to quaternary structure, the Tat system comprises two distinct complexes: a TatABC complex, containing multiple copies of TatA, TatB and TatC subunits, and a separate TatA complex, containing only TatA subunits. Substrates initially bind to the TatABC complex, which probably triggers association of the separate TatA complex to form the active translocon.

The protein localises to the cell membrane. Its function is as follows. Part of the twin-arginine translocation (Tat) system that transports large folded proteins containing a characteristic twin-arginine motif in their signal peptide across membranes. Together with TatB, TatC is part of a receptor directly interacting with Tat signal peptides. The sequence is that of Sec-independent protein translocase protein TatC from Xylanimonas cellulosilytica (strain DSM 15894 / JCM 12276 / CECT 5975 / KCTC 9989 / LMG 20990 / NBRC 107835 / XIL07).